The chain runs to 491 residues: Ketol-acid reductoisomerase (NADP(+)) (491 aa).

Residues 15–208 (AQLGKCRFMG…GGHRAGVLES (194 aa)) form the KARI N-terminal Rossmann domain. Residues 45–48 (CGAQ), Arg68, Arg76, Ser78, and 108–110 (DKQ) contribute to the NADP(+) site. Residue His132 is part of the active site. Gly158 serves as a coordination point for NADP(+). KARI C-terminal knotted domains follow at residues 209–344 (SFVA…TAPQ) and 345–484 (YEGK…MTDM). Residues Asp217, Glu221, Glu389, and Glu393 each coordinate Mg(2+). Ser414 provides a ligand contact to substrate.

It belongs to the ketol-acid reductoisomerase family. Mg(2+) is required as a cofactor.

It carries out the reaction (2R)-2,3-dihydroxy-3-methylbutanoate + NADP(+) = (2S)-2-acetolactate + NADPH + H(+). The catalysed reaction is (2R,3R)-2,3-dihydroxy-3-methylpentanoate + NADP(+) = (S)-2-ethyl-2-hydroxy-3-oxobutanoate + NADPH + H(+). It functions in the pathway amino-acid biosynthesis; L-isoleucine biosynthesis; L-isoleucine from 2-oxobutanoate: step 2/4. It participates in amino-acid biosynthesis; L-valine biosynthesis; L-valine from pyruvate: step 2/4. Functionally, involved in the biosynthesis of branched-chain amino acids (BCAA). Catalyzes an alkyl-migration followed by a ketol-acid reduction of (S)-2-acetolactate (S2AL) to yield (R)-2,3-dihydroxy-isovalerate. In the isomerase reaction, S2AL is rearranged via a Mg-dependent methyl migration to produce 3-hydroxy-3-methyl-2-ketobutyrate (HMKB). In the reductase reaction, this 2-ketoacid undergoes a metal-dependent reduction by NADPH to yield (R)-2,3-dihydroxy-isovalerate. This is Ketol-acid reductoisomerase (NADP(+)) from Escherichia coli (strain ATCC 8739 / DSM 1576 / NBRC 3972 / NCIMB 8545 / WDCM 00012 / Crooks).